Reading from the N-terminus, the 793-residue chain is Probable phosphoketolase (793 aa).

It belongs to the XFP family. It depends on thiamine diphosphate as a cofactor.

This Streptomyces avermitilis (strain ATCC 31267 / DSM 46492 / JCM 5070 / NBRC 14893 / NCIMB 12804 / NRRL 8165 / MA-4680) protein is Probable phosphoketolase.